A 168-amino-acid polypeptide reads, in one-letter code: Cytolysin secretion protein (168 aa).

The polypeptide is Cytolysin secretion protein (vvhB) (Vibrio vulnificus (strain CMCP6)).